The chain runs to 134 residues: UPF0412 protein YaaI (134 aa).

The N-terminal stretch at 1 to 23 (MRSVLTISASLLFGLALSSVAHA) is a signal peptide.

Belongs to the UPF0412 family.

This chain is UPF0412 protein YaaI, found in Salmonella choleraesuis (strain SC-B67).